Consider the following 201-residue polypeptide: MIMSVCLPWLARCRRFLIVSLAFAMLLLGIWGTLPFSLSDHGTAIAALEDDRYDGNIFVVYAGNGSLVPPRLNLRESFERKLPVILVYYLDDSKDCKQYAFIVSRMQEFYGRVASIIPVSVDSIPDQKRFRRDEPGYYYSGGVPQTVILDKSGKKIFDAQGALKFEVVDDVLRDLFDLLPRSESMELKQRTYNEFNSELVD.

The chain crosses the membrane as a helical span at residues 16 to 36; that stretch reads FLIVSLAFAMLLLGIWGTLPF.

It localises to the cellular thylakoid membrane. The polypeptide is Thylakoid membrane protein slr1796 (Synechocystis sp. (strain ATCC 27184 / PCC 6803 / Kazusa)).